Reading from the N-terminus, the 623-residue chain is DEAD-box ATP-dependent RNA helicase 52C (623 aa).

The interval 1 to 120 (MATPSRTSWA…DGDAAAGAGD (120 aa)) is disordered. The span at 10-29 (ADVADADPAPAPAPAANGPA) shows a compositional bias: low complexity. Positions 54–69 (APPPSSSSSSAPPPRA) are enriched in pro residues. A compositionally biased stretch (low complexity) spans 70-83 (APGLLAPRPAAAGM). Residues 84–97 (GRMGGGGGGGGFGG) are compositionally biased toward gly residues. Residues 155–183 (GTFAEIDLGQALNDNIRRCKYVRPTPVQR) carry the Q motif motif. Residues 186 to 372 (IPISLAGRDL…SDFLENYIFL (187 aa)) form the Helicase ATP-binding domain. 199–206 (AQTGSGKT) is a binding site for ATP. A DEAD box motif is present at residues 316-319 (DEAD). The region spanning 399-550 (HLMDLLHAQR…EVPAWLSRYA (152 aa)) is the Helicase C-terminal domain. The tract at residues 553–595 (PSYGGGGGRNRRSGGGSRFGGRDFRRDSSSGRGGGDYYGGGSS) is disordered. The span at 555–571 (YGGGGGRNRRSGGGSRF) shows a compositional bias: gly residues. Positions 572 to 581 (GGRDFRRDSS) are enriched in basic and acidic residues. Residues 583–595 (GRGGGDYYGGGSS) are compositionally biased toward gly residues.

It belongs to the DEAD box helicase family. DDX3/DED1 subfamily.

The enzyme catalyses ATP + H2O = ADP + phosphate + H(+). The protein is DEAD-box ATP-dependent RNA helicase 52C of Oryza sativa subsp. japonica (Rice).